Reading from the N-terminus, the 700-residue chain is Protein kinase C, eye isozyme (700 aa).

2 Phorbol-ester/DAG-type zinc fingers span residues 71–121 (GHRF…VFKC) and 136–186 (KHGW…PPMC). Residues 189 to 310 (DISEVRGKLL…LQKEPVDGWY (122 aa)) form the C2 domain. Residues D222, D228, D281, D283, S286, and D289 each contribute to the Ca(2+) site. In terms of domain architecture, Protein kinase spans 371 to 629 (FNFVKVIGKG…RQEITTHPFF (259 aa)). ATP-binding positions include 377 to 385 (IGKGSFGKV) and K400. Residue D495 is the Proton acceptor of the active site. Positions 630–700 (RNVDWDKAEA…FMNPEFITII (71 aa)) constitute an AGC-kinase C-terminal domain.

The protein belongs to the protein kinase superfamily. AGC Ser/Thr protein kinase family. PKC subfamily. The cofactor is Ca(2+). Exclusively expressed in photoreceptor cells.

The catalysed reaction is L-seryl-[protein] + ATP = O-phospho-L-seryl-[protein] + ADP + H(+). It carries out the reaction L-threonyl-[protein] + ATP = O-phospho-L-threonyl-[protein] + ADP + H(+). This is a calcium-activated, phospholipid-dependent, serine- and threonine-specific enzyme. This isozyme is a negative regulator of the visual transduction cascade and has been shown to be required for photoreceptor cell inactivation and light adaptation. Negative regulation is dependent on interaction with scaffolding protein inaD. Acts in a hh-signaling pathway which regulates the Duox-dependent gut immune response to bacterial uracil; required for the activation of Cad99C and consequently Cad99C-dependent endosome formation, which is essential for the Duox-dependent production of reactive oxygen species (ROS) in response to intestinal bacterial infection. In Drosophila melanogaster (Fruit fly), this protein is Protein kinase C, eye isozyme (inaC).